Here is a 197-residue protein sequence, read N- to C-terminus: 3-isopropylmalate dehydratase small subunit (197 aa).

The protein belongs to the LeuD family. LeuD type 1 subfamily. In terms of assembly, heterodimer of LeuC and LeuD.

It catalyses the reaction (2R,3S)-3-isopropylmalate = (2S)-2-isopropylmalate. It functions in the pathway amino-acid biosynthesis; L-leucine biosynthesis; L-leucine from 3-methyl-2-oxobutanoate: step 2/4. Functionally, catalyzes the isomerization between 2-isopropylmalate and 3-isopropylmalate, via the formation of 2-isopropylmaleate. In Corynebacterium glutamicum (strain ATCC 13032 / DSM 20300 / JCM 1318 / BCRC 11384 / CCUG 27702 / LMG 3730 / NBRC 12168 / NCIMB 10025 / NRRL B-2784 / 534), this protein is 3-isopropylmalate dehydratase small subunit.